The primary structure comprises 325 residues: Olfactory receptor 14L1 (325 aa).

Residues 1 to 43 are Extracellular-facing; that stretch reads MAQFNKNQLIACRRNGTTTSDFNQTEVAEFFLMGFSNSWDIQI. Residues 44–64 form a helical membrane-spanning segment; the sequence is VHAALFFLVYLAAVIGNLLII. Residues 65-72 lie on the Cytoplasmic side of the membrane; it reads ILTTLDVH. Residues 73–93 form a helical membrane-spanning segment; it reads LQTPMYFFLRNLSFLDFCYIS. At 94–117 the chain is on the extracellular side; the sequence is VTIPKSIVSSLTHDTSISFFGCAL. Residues 118-138 traverse the membrane as a helical segment; it reads QAFFFMDLATTEVAILTVMSY. Residues 139-151 are Cytoplasmic-facing; that stretch reads DRYMAICRPLHYE. A helical membrane pass occupies residues 152-172; that stretch reads VIINQGVCLRMMAMSWLSGVI. Over 173–214 the chain is Extracellular; that stretch reads CGFMHVIATFSLPFCGRNRIRQFFCNIPQLLSLLDPKVITIE. The helical transmembrane segment at 215–235 threads the bilayer; that stretch reads IGVMVFGTSLVIISFVVITLS. Over 236-255 the chain is Cytoplasmic; that stretch reads YMYIFSVIMRIPSKEGRSKT. Residues 256–276 form a helical membrane-spanning segment; it reads FSTCIPHLVVVTLFMISGSIA. The Extracellular segment spans residues 277–289; sequence YVKPISNSPPVLD. Residues 290–310 traverse the membrane as a helical segment; that stretch reads VFLSAFYTVVPPTLNPVIYSL. The Cytoplasmic portion of the chain corresponds to 311–325; sequence RNRDMKAALRRQCGP.

The protein belongs to the G-protein coupled receptor 1 family.

Its subcellular location is the cell membrane. Functionally, odorant receptor. The chain is Olfactory receptor 14L1 from Homo sapiens (Human).